Reading from the N-terminus, the 453-residue chain is Allantoinase (453 aa).

Zn(2+) is bound by residues H59, H61, K146, H186, H242, and D315. K146 carries the post-translational modification N6-carboxylysine.

It belongs to the metallo-dependent hydrolases superfamily. Allantoinase family. As to quaternary structure, homotetramer. Requires Zn(2+) as cofactor. In terms of processing, carboxylation allows a single lysine to coordinate two zinc ions.

The enzyme catalyses (S)-allantoin + H2O = allantoate + H(+). It participates in nitrogen metabolism; (S)-allantoin degradation; allantoate from (S)-allantoin: step 1/1. Functionally, catalyzes the conversion of allantoin (5-ureidohydantoin) to allantoic acid by hydrolytic cleavage of the five-member hydantoin ring. The polypeptide is Allantoinase (Salmonella gallinarum (strain 287/91 / NCTC 13346)).